Reading from the N-terminus, the 434-residue chain is Prenyltransferase penG (434 aa).

Polar residues-rich tracts occupy residues 1 to 14 and 21 to 35; these read MTQD…QTAG and THSN…PSTW. A disordered region spans residues 1–35; the sequence is MTQDVVTVSSQTAGTIKESGTHSNPDNKTTSPSTW. Residues 104-105 and E108 each bind L-tryptophan; that span reads EI. Residues R122, K208, R275, K277, Y279, and Y348 each coordinate substrate.

Belongs to the tryptophan dimethylallyltransferase family.

The catalysed reaction is yaequinolone E + dimethylallyl diphosphate + H2O = [(1'E)-3'-hydroxy-3',7'-dimethylocta-1',6'-dien-1'-yl]-quinolinone B + diphosphate. Its pathway is secondary metabolite biosynthesis. It participates in alkaloid biosynthesis. The protein operates within mycotoxin biosynthesis. In terms of biological role, prenyltransferase; part of the gene cluster that mediates the biosynthesis of penigequinolones, potent insecticidal alkaloids that contain a highly modified 10-carbon prenyl group. The first stage is catalyzed by the nonribosomal peptide synthetase penN that condenses anthranilic acid and O-methyl-L-tyrosine to produce 4'-methoxycyclopeptin. 4'-methoxycyclopeptin is then converted to 4'-methoxydehydrocyclopeptin by the ketoglutarate-dependent dioxygenase penM through dehydrogenation to form a double bond between C-alpha and C-beta of the O-methyltyrosine side chain. PenM also converts its first product methoxydehydrocyclopeptin to 4'-methoxycyclopenin. The following conversion of 4'methoxycyclopenin into 4'-methoxyviridicatin is catalyzed by the cyclopenase penL. 4'-methoxyviridicatin is the precursor of quinolone natural products, and is further converted to quinolinone B. The prenyltransferase penI then catalyzes the canonical Friedel-Crafts alkylation of quinolinone B with dimethylallyl cation to yield dimethylallyl quinolone, which is subjected to FAD-dependent dehydrogenation by the FAD-linked oxidoreductase penH to yield conjugated aryl diene. The delta(3') double bond then serves as the site of the second alkylation with DMAPP catalyzed by the prenyltransferase penG to yield a carbenium ion intermediate, which can be attacked by H(2)O to yield a styrenyl quinolone containing a C3'-hydroxyprenyl chain, or undergo cyclization to yield yaequinolones J1 and J2. The conversion of the styrenyl quinolone into the tetrahydrofuran-containing yaequinolone C is performed by the FAD-dependent monooxygenase penE and involves epoxidation of the terminal C7'-C8' olefin, followed by epoxide ring opening initiated by the C3' hydroxyl group. The predicted cysteine hydrolase penJ acts as an epoxide hydrolase that enhances the rate of the 5-exo-tet cyclization step, increasing the yield of yaequinolone C. PenF catalyzes the cationic rearrangement of the epoxide formed by penE (before ring opening to produce yaequinolone C) into yaequinolone D. Finally, the short-chain dehydrogenase/reductase (SDR)-like reductase penD, catalyzes both the dehydration of yaequinolone D and the reduction of the resulting oxonium to yield penigequinolone. This is Prenyltransferase penG from Penicillium thymicola.